A 1070-amino-acid chain; its full sequence is DNA-directed RNA polymerase subunit beta (1070 aa).

The protein belongs to the RNA polymerase beta chain family. As to quaternary structure, in plastids the minimal PEP RNA polymerase catalytic core is composed of four subunits: alpha, beta, beta', and beta''. When a (nuclear-encoded) sigma factor is associated with the core the holoenzyme is formed, which can initiate transcription.

It is found in the plastid. It catalyses the reaction RNA(n) + a ribonucleoside 5'-triphosphate = RNA(n+1) + diphosphate. Its function is as follows. DNA-dependent RNA polymerase catalyzes the transcription of DNA into RNA using the four ribonucleoside triphosphates as substrates. The protein is DNA-directed RNA polymerase subunit beta of Cuscuta exaltata (Tall dodder).